The primary structure comprises 61 residues: Weak toxin CM-2a (61 aa).

4 disulfide bridges follow: cysteine 3/cysteine 19, cysteine 12/cysteine 37, cysteine 41/cysteine 49, and cysteine 50/cysteine 55.

Belongs to the three-finger toxin family. Short-chain subfamily. Orphan group XX sub-subfamily. In terms of tissue distribution, expressed by the venom gland.

It localises to the secreted. The sequence is that of Weak toxin CM-2a from Naja annulifera (Banded Egyptian cobra).